We begin with the raw amino-acid sequence, 217 residues long: Probable transaldolase (217 aa).

Lys-83 (schiff-base intermediate with substrate) is an active-site residue.

The protein belongs to the transaldolase family. Type 3B subfamily.

The protein resides in the cytoplasm. The catalysed reaction is D-sedoheptulose 7-phosphate + D-glyceraldehyde 3-phosphate = D-erythrose 4-phosphate + beta-D-fructose 6-phosphate. It functions in the pathway carbohydrate degradation; pentose phosphate pathway; D-glyceraldehyde 3-phosphate and beta-D-fructose 6-phosphate from D-ribose 5-phosphate and D-xylulose 5-phosphate (non-oxidative stage): step 2/3. In terms of biological role, transaldolase is important for the balance of metabolites in the pentose-phosphate pathway. In Clostridium botulinum (strain Loch Maree / Type A3), this protein is Probable transaldolase.